A 247-amino-acid chain; its full sequence is Ribosomal RNA small subunit methyltransferase G (247 aa).

S-adenosyl-L-methionine contacts are provided by residues Gly84, Phe89, 136-137 (AE), and Arg155.

The protein belongs to the methyltransferase superfamily. RNA methyltransferase RsmG family.

The protein resides in the cytoplasm. In terms of biological role, specifically methylates the N7 position of a guanine in 16S rRNA. The sequence is that of Ribosomal RNA small subunit methyltransferase G from Prochlorococcus marinus (strain MIT 9303).